The chain runs to 122 residues: Small ribosomal subunit protein uS13 (122 aa).

Residues 96–122 (LPVHGQRTKTNARTRKGPARTVAGKKK) are disordered.

It belongs to the universal ribosomal protein uS13 family. Part of the 30S ribosomal subunit. Forms a loose heterodimer with protein S19. Forms two bridges to the 50S subunit in the 70S ribosome.

In terms of biological role, located at the top of the head of the 30S subunit, it contacts several helices of the 16S rRNA. In the 70S ribosome it contacts the 23S rRNA (bridge B1a) and protein L5 of the 50S subunit (bridge B1b), connecting the 2 subunits; these bridges are implicated in subunit movement. Contacts the tRNAs in the A and P-sites. In Geotalea daltonii (strain DSM 22248 / JCM 15807 / FRC-32) (Geobacter daltonii), this protein is Small ribosomal subunit protein uS13.